Consider the following 365-residue polypeptide: 2-aminoethylphosphonate--pyruvate transaminase (365 aa).

At Lys-194 the chain carries N6-(pyridoxal phosphate)lysine.

Belongs to the class-V pyridoxal-phosphate-dependent aminotransferase family. PhnW subfamily. As to quaternary structure, homodimer. Requires pyridoxal 5'-phosphate as cofactor.

The catalysed reaction is (2-aminoethyl)phosphonate + pyruvate = phosphonoacetaldehyde + L-alanine. Involved in phosphonate degradation. This chain is 2-aminoethylphosphonate--pyruvate transaminase, found in Bacillus cereus (strain Q1).